A 332-amino-acid chain; its full sequence is Beta-ketoacyl-[acyl-carrier-protein] synthase III (332 aa).

Active-site residues include Cys114 and His255. Residues Gln256–Arg260 are ACP-binding. Residue Asn285 is part of the active site.

Belongs to the thiolase-like superfamily. FabH family. As to quaternary structure, homodimer.

Its subcellular location is the cytoplasm. The catalysed reaction is malonyl-[ACP] + acetyl-CoA + H(+) = 3-oxobutanoyl-[ACP] + CO2 + CoA. It functions in the pathway lipid metabolism; fatty acid biosynthesis. Catalyzes the condensation reaction of fatty acid synthesis by the addition to an acyl acceptor of two carbons from malonyl-ACP. Catalyzes the first condensation reaction which initiates fatty acid synthesis and may therefore play a role in governing the total rate of fatty acid production. Possesses both acetoacetyl-ACP synthase and acetyl transacylase activities. Its substrate specificity determines the biosynthesis of branched-chain and/or straight-chain of fatty acids. This is Beta-ketoacyl-[acyl-carrier-protein] synthase III from Sulfurimonas denitrificans (strain ATCC 33889 / DSM 1251) (Thiomicrospira denitrificans (strain ATCC 33889 / DSM 1251)).